A 182-amino-acid chain; its full sequence is NADH-quinone oxidoreductase subunit B (182 aa).

[4Fe-4S] cluster-binding residues include Cys-47, Cys-48, Cys-113, and Cys-142.

Belongs to the complex I 20 kDa subunit family. As to quaternary structure, NDH-1 is composed of 14 different subunits. Subunits NuoB, C, D, E, F, and G constitute the peripheral sector of the complex. It depends on [4Fe-4S] cluster as a cofactor.

The protein localises to the cell inner membrane. The enzyme catalyses a quinone + NADH + 5 H(+)(in) = a quinol + NAD(+) + 4 H(+)(out). In terms of biological role, NDH-1 shuttles electrons from NADH, via FMN and iron-sulfur (Fe-S) centers, to quinones in the respiratory chain. The immediate electron acceptor for the enzyme in this species is believed to be ubiquinone. Couples the redox reaction to proton translocation (for every two electrons transferred, four hydrogen ions are translocated across the cytoplasmic membrane), and thus conserves the redox energy in a proton gradient. This Anaeromyxobacter dehalogenans (strain 2CP-1 / ATCC BAA-258) protein is NADH-quinone oxidoreductase subunit B.